The primary structure comprises 550 residues: Chaperonin GroEL 2 (550 aa).

ATP contacts are provided by residues 30 to 33 (TLGP), K51, 87 to 91 (DGTTT), G415, 480 to 482 (NAA), and D496.

The protein belongs to the chaperonin (HSP60) family. Forms a cylinder of 14 subunits composed of two heptameric rings stacked back-to-back. Interacts with the co-chaperonin GroES.

The protein localises to the cytoplasm. The catalysed reaction is ATP + H2O + a folded polypeptide = ADP + phosphate + an unfolded polypeptide.. Its function is as follows. Together with its co-chaperonin GroES, plays an essential role in assisting protein folding. The GroEL-GroES system forms a nano-cage that allows encapsulation of the non-native substrate proteins and provides a physical environment optimized to promote and accelerate protein folding. The chain is Chaperonin GroEL 2 from Erythrobacter litoralis (strain HTCC2594).